The sequence spans 208 residues: UPF0637 protein BCG9842_B1177 (208 aa).

The protein belongs to the UPF0637 family.

In Bacillus cereus (strain G9842), this protein is UPF0637 protein BCG9842_B1177.